A 351-amino-acid polypeptide reads, in one-letter code: Glycerol-1-phosphate dehydrogenase [NAD(P)+] (351 aa).

Residues 97 to 101 (GKVID) and 119 to 122 (TSPS) each bind NAD(+). Residue D124 participates in substrate binding. S128 is a binding site for NAD(+). D171 contacts substrate. Zn(2+) contacts are provided by D171 and H251. H255 is a binding site for substrate. H267 lines the Zn(2+) pocket.

This sequence belongs to the glycerol-1-phosphate dehydrogenase family. In terms of assembly, homodimer. It depends on Zn(2+) as a cofactor.

The protein resides in the cytoplasm. The enzyme catalyses sn-glycerol 1-phosphate + NAD(+) = dihydroxyacetone phosphate + NADH + H(+). It catalyses the reaction sn-glycerol 1-phosphate + NADP(+) = dihydroxyacetone phosphate + NADPH + H(+). It functions in the pathway membrane lipid metabolism; glycerophospholipid metabolism. Functionally, catalyzes the NAD(P)H-dependent reduction of dihydroxyacetonephosphate (DHAP or glycerone phosphate) to glycerol 1-phosphate (G1P). The G1P thus generated is used as the glycerophosphate backbone of phospholipids in the cellular membranes of Archaea. The protein is Glycerol-1-phosphate dehydrogenase [NAD(P)+] of Saccharolobus islandicus (strain M.16.27) (Sulfolobus islandicus).